Consider the following 542-residue polypeptide: Cryptochrome-1 (542 aa).

Residues 5-140 (GANVIWFRHG…DFVEKVSHTL (136 aa)) form the Photolyase/cryptochrome alpha/beta domain. FAD-binding positions include Arg-237, Ser-265, Ser-267, Gln-311, His-378, 410 to 412 (DAD), Cys-416, and Asn-419.

The protein belongs to the DNA photolyase class-1 family. Interacts with tim and per; promoted by light conditions. Interaction with tim irreversibly commits tim to proteasomal degradation. Interacts with l(1)G0136/CG8198. FAD is required as a cofactor. Expressed at higher levels in the head than in body and it is more expressed in antennae than in legs, wings and mouth appendages. Prominent expression is seen in cells of the lateral brain, which are close to or coincident with the clock neurons. Abundance oscillates in a circadian manner.

The protein localises to the cytoplasm. The protein resides in the perinuclear region. Its subcellular location is the nucleus. In terms of biological role, blue light-dependent regulator that is the input of the circadian feedback loop. Has no photolyase activity for cyclobutane pyrimidine dimers or 6-4 photoproducts. Regulation of expression by light suggests a role in photoreception for locomotor activity rhythms. Functions, together with per, as a transcriptional repressor required for the oscillation of peripheral circadian clocks and for the correct specification of clock cells. Genes directly activated by the transcription factors Clock (Clk) and cycle (cyc) are repressed by cry. Necessary for light-dependent magnetosensitivity, an intact circadian system is not required for the magnetoreception mechanism to operate. Required for both the naive and trained responses to magnetic field, consistent with the notion that cry is in the input pathway of magnetic sensing. The protein is Cryptochrome-1 of Drosophila melanogaster (Fruit fly).